The primary structure comprises 563 residues: Arginine--tRNA ligase (563 aa).

A 'HIGH' region motif is present at residues 121–131 (PNIAKPFSIGH).

This sequence belongs to the class-I aminoacyl-tRNA synthetase family. In terms of assembly, monomer.

The protein resides in the cytoplasm. The catalysed reaction is tRNA(Arg) + L-arginine + ATP = L-arginyl-tRNA(Arg) + AMP + diphosphate. This is Arginine--tRNA ligase from Streptococcus thermophilus (strain CNRZ 1066).